The sequence spans 304 residues: Uricase (304 aa).

N-acetylalanine is present on A2. Residues K10 and K23 each carry the N6-acetyllysine; alternate modification. 2 positions are modified to N6-succinyllysine; alternate: K10 and K23. K23 acts as the Charge relay system in catalysis. An N6-acetyllysine mark is found at K27 and K36. S39 and S63 each carry phosphoserine. The active-site Charge relay system is the T68. Positions 68 and 69 each coordinate urate. N6-acetyllysine occurs at positions 118, 122, and 164. Residue F170 participates in urate binding. An N6-acetyllysine mark is found at K175 and K185. R187 contributes to the urate binding site. N6-acetyllysine; alternate occurs at positions 221 and 228. N6-succinyllysine; alternate occurs at positions 221 and 228. The residue at position 232 (S232) is a Phosphoserine. V235, Q236, and N262 together coordinate urate. H264 functions as the Charge relay system in the catalytic mechanism. N6-acetyllysine is present on K278. Residue Y289 is modified to Phosphotyrosine. Residues S302–L304 carry the Microbody targeting signal motif.

This sequence belongs to the uricase family. As to quaternary structure, homotetramer.

It is found in the peroxisome. The catalysed reaction is urate + O2 + H2O = 5-hydroxyisourate + H2O2. Its pathway is purine metabolism; urate degradation; (S)-allantoin from urate: step 1/3. Functionally, catalyzes the oxidation of uric acid to 5-hydroxyisourate, which is further processed to form (S)-allantoin. The protein is Uricase (UOX) of Bos taurus (Bovine).